The chain runs to 448 residues: Cytoplasmic tRNA 2-thiolation protein 2 (448 aa).

Belongs to the CTU2/NCS2 family.

The protein localises to the cytoplasm. Its pathway is tRNA modification; 5-methoxycarbonylmethyl-2-thiouridine-tRNA biosynthesis. Plays a central role in 2-thiolation of mcm(5)S(2)U at tRNA wobble positions of tRNA(Lys), tRNA(Glu) and tRNA(Gln). May act by forming a heterodimer with NCS6 that ligates sulfur from thiocarboxylated URM1 onto the uridine of tRNAs at wobble position. Prior mcm(5) tRNA modification by the elongator complex is required for 2-thiolation. May also be involved in protein urmylation. This is Cytoplasmic tRNA 2-thiolation protein 2 from Scheffersomyces stipitis (strain ATCC 58785 / CBS 6054 / NBRC 10063 / NRRL Y-11545) (Yeast).